A 306-amino-acid polypeptide reads, in one-letter code: Protein-L-isoaspartate O-methyltransferase 2 (306 aa).

A disordered region spans residues 1-82; sequence MSTTPPRNKF…ASAATAGGGG (82 aa). Over residues 38–48 the composition is skewed to pro residues; sequence PAAPTPAPAKP. Over residues 54–77 the composition is skewed to low complexity; the sequence is PRTAAPAPAPVPASAVEQRASAAT. Ser-142 is a catalytic residue.

This sequence belongs to the methyltransferase superfamily. L-isoaspartyl/D-aspartyl protein methyltransferase family.

Its subcellular location is the cytoplasm. The catalysed reaction is [protein]-L-isoaspartate + S-adenosyl-L-methionine = [protein]-L-isoaspartate alpha-methyl ester + S-adenosyl-L-homocysteine. Functionally, catalyzes the methyl esterification of L-isoaspartyl residues in peptides and proteins that result from spontaneous decomposition of normal L-aspartyl and L-asparaginyl residues. It plays a role in the repair and/or degradation of damaged proteins. This is Protein-L-isoaspartate O-methyltransferase 2 from Cupriavidus necator (strain ATCC 17699 / DSM 428 / KCTC 22496 / NCIMB 10442 / H16 / Stanier 337) (Ralstonia eutropha).